The chain runs to 862 residues: Protein translocase subunit SecA (862 aa).

ATP-binding positions include Q86, 104 to 108 (GEGKT), and D499. Positions 848, 850, 859, and 860 each coordinate Zn(2+).

It belongs to the SecA family. In terms of assembly, monomer and homodimer. Part of the essential Sec protein translocation apparatus which comprises SecA, SecYEG and auxiliary proteins SecDF-YajC and YidC. Zn(2+) is required as a cofactor.

The protein localises to the cell inner membrane. Its subcellular location is the cytoplasm. It catalyses the reaction ATP + H2O + cellular proteinSide 1 = ADP + phosphate + cellular proteinSide 2.. Part of the Sec protein translocase complex. Interacts with the SecYEG preprotein conducting channel. Has a central role in coupling the hydrolysis of ATP to the transfer of proteins into and across the cell membrane, serving both as a receptor for the preprotein-SecB complex and as an ATP-driven molecular motor driving the stepwise translocation of polypeptide chains across the membrane. This chain is Protein translocase subunit SecA, found in Ehrlichia canis (strain Jake).